Here is a 363-residue protein sequence, read N- to C-terminus: UDP-N-acetylglucosamine--N-acetylmuramyl-(pentapeptide) pyrophosphoryl-undecaprenol N-acetylglucosamine transferase (363 aa).

UDP-N-acetyl-alpha-D-glucosamine contacts are provided by residues 10-12 (TGG), Asn124, Ser195, Ile250, and Gln295.

The protein belongs to the glycosyltransferase 28 family. MurG subfamily.

The protein localises to the cell membrane. The catalysed reaction is Mur2Ac(oyl-L-Ala-gamma-D-Glu-L-Lys-D-Ala-D-Ala)-di-trans,octa-cis-undecaprenyl diphosphate + UDP-N-acetyl-alpha-D-glucosamine = beta-D-GlcNAc-(1-&gt;4)-Mur2Ac(oyl-L-Ala-gamma-D-Glu-L-Lys-D-Ala-D-Ala)-di-trans,octa-cis-undecaprenyl diphosphate + UDP + H(+). It participates in cell wall biogenesis; peptidoglycan biosynthesis. Functionally, cell wall formation. Catalyzes the transfer of a GlcNAc subunit on undecaprenyl-pyrophosphoryl-MurNAc-pentapeptide (lipid intermediate I) to form undecaprenyl-pyrophosphoryl-MurNAc-(pentapeptide)GlcNAc (lipid intermediate II). This chain is UDP-N-acetylglucosamine--N-acetylmuramyl-(pentapeptide) pyrophosphoryl-undecaprenol N-acetylglucosamine transferase, found in Lactiplantibacillus plantarum (strain ATCC BAA-793 / NCIMB 8826 / WCFS1) (Lactobacillus plantarum).